The chain runs to 237 residues: Protein CUSTOS (237 aa).

Disordered regions lie at residues 1–23, 50–69, and 97–237; these read MAAP…LDRF, LRVR…TTPE, and ISKA…LGNE. Positions 52–62 are enriched in basic and acidic residues; sequence VRPDCHEHDGN. Residues 162-177 are compositionally biased toward polar residues; it reads STLQQEPQSTPSNVCD. Residues 181–190 are compositionally biased toward basic residues; it reads PKKKRKKKKK. The short motif at 182-190 is the Nucleolar localization signal (NLS1) element; the sequence is KKKRKKKKK. 2 stretches are compositionally biased toward basic and acidic residues: residues 203-216 and 225-237; these read ETMH…ELQA and KLEM…LGNE. Positions 217 to 225 match the Nucleolar localization signal (NLS2) motif; it reads KRKKKKKQK.

It belongs to the CUSTOS family. Interacts (via NLS1 and NLS2) with dvl2; the interaction is negatively regulated by Wnt stimulation. Interacts with csnk1a1. Interacts with ctnnb1; the interaction is positively regulated by Wnt stimulation. Post-translationally, phosphorylated by ck1/csnk1a1.

It is found in the nucleus envelope. In terms of biological role, essential for Spemann-Mangold organizer formation and subsequent anterior head development in the embryo. Inhibits canonical Wnt signaling pathway by antagonizing nuclear import of beta-catenin (ctnnb1) during embryogenesis. This Xenopus laevis (African clawed frog) protein is Protein CUSTOS.